The primary structure comprises 300 residues: Epimerase family protein MW0731 (300 aa).

Belongs to the NAD(P)-dependent epimerase/dehydratase family. SDR39U1 subfamily.

This Staphylococcus aureus (strain MW2) protein is Epimerase family protein MW0731.